The sequence spans 304 residues: D-alanine--D-alanine ligase (304 aa).

Residues 103–299 (KLIWQALGLP…FADLCIEILK (197 aa)) enclose the ATP-grasp domain. ATP is bound at residue 129–184 (EEKLGLPMFVKPAAEGSSVGVVKVKGKGRLKSVYEELKHLQGEIIAERFIGGGEYS). Mg(2+)-binding residues include D253, E266, and N268.

Belongs to the D-alanine--D-alanine ligase family. Mg(2+) is required as a cofactor. The cofactor is Mn(2+).

The protein resides in the cytoplasm. The enzyme catalyses 2 D-alanine + ATP = D-alanyl-D-alanine + ADP + phosphate + H(+). Its pathway is cell wall biogenesis; peptidoglycan biosynthesis. Its function is as follows. Cell wall formation. In Neisseria meningitidis serogroup B (strain ATCC BAA-335 / MC58), this protein is D-alanine--D-alanine ligase.